Here is a 281-residue protein sequence, read N- to C-terminus: DegV domain-containing protein DR_1986 (281 aa).

The region spanning 3-278 (IAIVTDSTSD…PGAVGVALEP (276 aa)) is the DegV domain. Residues Thr-61 and Ser-93 each coordinate hexadecanoate.

Functionally, may bind long-chain fatty acids, such as palmitate, and may play a role in lipid transport or fatty acid metabolism. The polypeptide is DegV domain-containing protein DR_1986 (Deinococcus radiodurans (strain ATCC 13939 / DSM 20539 / JCM 16871 / CCUG 27074 / LMG 4051 / NBRC 15346 / NCIMB 9279 / VKM B-1422 / R1)).